A 253-amino-acid chain; its full sequence is Imidazole glycerol phosphate synthase subunit HisF (253 aa).

Active-site residues include Asp11 and Asp130.

It belongs to the HisA/HisF family. Heterodimer of HisH and HisF.

It is found in the cytoplasm. It carries out the reaction 5-[(5-phospho-1-deoxy-D-ribulos-1-ylimino)methylamino]-1-(5-phospho-beta-D-ribosyl)imidazole-4-carboxamide + L-glutamine = D-erythro-1-(imidazol-4-yl)glycerol 3-phosphate + 5-amino-1-(5-phospho-beta-D-ribosyl)imidazole-4-carboxamide + L-glutamate + H(+). The protein operates within amino-acid biosynthesis; L-histidine biosynthesis; L-histidine from 5-phospho-alpha-D-ribose 1-diphosphate: step 5/9. In terms of biological role, IGPS catalyzes the conversion of PRFAR and glutamine to IGP, AICAR and glutamate. The HisF subunit catalyzes the cyclization activity that produces IGP and AICAR from PRFAR using the ammonia provided by the HisH subunit. The sequence is that of Imidazole glycerol phosphate synthase subunit HisF from Lysinibacillus sphaericus (strain C3-41).